Consider the following 487-residue polypeptide: Acetyl-coenzyme A carboxylase carboxyl transferase subunit beta, chloroplastic (487 aa).

A CoA carboxyltransferase N-terminal domain is found at 223-487 (LWIQCDNCYG…FCPLNKTEIK (265 aa)). Zn(2+) is bound by residues C227, C230, C243, and C246. A C4-type zinc finger spans residues 227 to 246 (CDNCYGLMYKKVKMNVCEQC).

Belongs to the AccD/PCCB family. As to quaternary structure, acetyl-CoA carboxylase is a heterohexamer composed of biotin carboxyl carrier protein, biotin carboxylase and 2 subunits each of ACCase subunit alpha and ACCase plastid-coded subunit beta (accD). It depends on Zn(2+) as a cofactor.

The protein localises to the plastid. The protein resides in the chloroplast stroma. The enzyme catalyses N(6)-carboxybiotinyl-L-lysyl-[protein] + acetyl-CoA = N(6)-biotinyl-L-lysyl-[protein] + malonyl-CoA. Its pathway is lipid metabolism; malonyl-CoA biosynthesis; malonyl-CoA from acetyl-CoA: step 1/1. Functionally, component of the acetyl coenzyme A carboxylase (ACC) complex. Biotin carboxylase (BC) catalyzes the carboxylation of biotin on its carrier protein (BCCP) and then the CO(2) group is transferred by the transcarboxylase to acetyl-CoA to form malonyl-CoA. In Nasturtium officinale (Watercress), this protein is Acetyl-coenzyme A carboxylase carboxyl transferase subunit beta, chloroplastic.